The following is a 704-amino-acid chain: MVSPTKMIIRSPLKETDTNLKHNNGIAASTTAAGHLNVFSNDNNCNNNNTTESFPKKRSLERLELQQQQHLHEKKRARIERARSIEGAVQVSKGTGLKNVEPRVTPKELLEWQTNWKKIMKRDSRIYFDITDDVEMNTYNKSKMDKRRDLLKRGFLTLGAQITQFFDTTVTIVITRRSVENIYLLKDTDILSRAKKNYMKVWSYEKAARFLKNLDVDLDHLSKTKSASLAAPTLSNLLHNEKLYGPTDRDPRTKRDDIHYFKYPHVYLYDLWQTWAPIITLEWKPQELTNLDELPYPILKIGSFGRCPFIGDRNYDESSYKRVVKRYSRDKANKKYALQLRALFQYHADTLLNTSSVNDQTKNLIFIPHTCNDSTKSFKKWMQEKAKNFEKTELKKTDDSAVQDVRNEHADQTDEKNSILLNETETKEPPLKEEKENKQSIAEESNKYPQRKELAATPKLNHPVLATFARQETEEVPDDLCTLKTKSRQAFEIKASGAHQSNDVATSFGNGLGPTRASVMSKNMKSLSRLMVDRKLGVKQTNGNNKNYTATIATTAETSKENRHRLDFNALKKDEAPSKETGKDSAVHLETNRKPQNFPKVATKSVSADSKVHNDIKITTTESPTASKKSTSTNVTLHFNAQTAQTAQPVKKETVKNSGYCENCRVKYESLEQHIVSEKHLSFAENDLNFEAIDSLIENLRFQI.

Residues 10–19 (RSPLKETDTN) are d box 1. S59 is subject to Phosphoserine. Residues 62-70 (RLELQQQQH) are d box 2. The POLO box domain (PBD)-binding signature appears at 83 to 88 (RSIEGA). A phosphoserine mark is found at S84 and S235. Basic and acidic residues-rich tracts occupy residues 397–417 (TDDS…DEKN), 424–438 (TETK…KENK), and 444–453 (ESNKYPQRKE). The interval 397–453 (TDDSAVQDVRNEHADQTDEKNSILLNETETKEPPLKEEKENKQSIAEESNKYPQRKE) is disordered. A Phosphoserine modification is found at S623. The DBF4-type zinc finger occupies 654 to 703 (TVKNSGYCENCRVKYESLEQHIVSEKHLSFAENDLNFEAIDSLIENLRFQ). Residues C661, C664, H674, and H680 each contribute to the Zn(2+) site.

In terms of assembly, heterodimer with CDC7 to form the DBF4-dependent kinase (DDK) complex. Interacts (via PBD-binding motif) with CDC5 (via POLO box domains). Interacts (via N-terminus) with ORC2, ORC3 and RAD53. Binds to ARS1 origin DNA. Phosphorylated by CDC7 and by CDC5.

In terms of biological role, regulatory subunit of the CDC7-DBF4 kinase, also called DBF4-dependent kinase (DDK), which is involved in cell cycle regulation of premitotic and premeiotic chromosome replication and in chromosome segregation. DDK plays an essential role in initiating DNA replication at replication origins by phosphorylating the MCM2 and MCM4 subunits of the MCM2-7 helicase complex. DBF4 recruits the catalytic subunit CDC7 to MCM2 and to origins of replication. DDK also has postreplicative functions in meiosis. DDK phosphorylates the meiosis-specific double-strand break protein MER2 for initiation of meiotic recombination. Interacts with CDC5 during meiosis to promote double-strand breaks and monopolar spindle orientation. Inhibits CDC5 activity during mitosis through direct binding to its PBD. The chain is DDK kinase regulatory subunit DBF4 (DBF4) from Saccharomyces cerevisiae (strain ATCC 204508 / S288c) (Baker's yeast).